A 275-amino-acid polypeptide reads, in one-letter code: NH(3)-dependent NAD(+) synthetase (275 aa).

46–53 lines the ATP pocket; the sequence is GISGGQDS. Residue aspartate 52 participates in Mg(2+) binding. Arginine 140 is a deamido-NAD(+) binding site. Residue threonine 160 coordinates ATP. Glutamate 165 provides a ligand contact to Mg(2+). The deamido-NAD(+) site is built by lysine 173 and aspartate 180. Positions 189 and 211 each coordinate ATP. 260 to 261 is a binding site for deamido-NAD(+); the sequence is HK.

Belongs to the NAD synthetase family. Homodimer.

It carries out the reaction deamido-NAD(+) + NH4(+) + ATP = AMP + diphosphate + NAD(+) + H(+). It functions in the pathway cofactor biosynthesis; NAD(+) biosynthesis; NAD(+) from deamido-NAD(+) (ammonia route): step 1/1. Functionally, catalyzes the ATP-dependent amidation of deamido-NAD to form NAD. Uses ammonia as a nitrogen source. This Cronobacter sakazakii (strain ATCC BAA-894) (Enterobacter sakazakii) protein is NH(3)-dependent NAD(+) synthetase.